A 479-amino-acid polypeptide reads, in one-letter code: Cysteine--tRNA ligase (479 aa).

A Zn(2+)-binding site is contributed by Cys28. The short motif at 30–40 (PTVYDHAHLGH) is the 'HIGH' region element. Zn(2+) contacts are provided by Cys207, His232, and Glu236. The 'KMSKS' region motif lies at 264-268 (KMSKS). Lys267 is an ATP binding site.

Belongs to the class-I aminoacyl-tRNA synthetase family. Zn(2+) serves as cofactor.

It localises to the cytoplasm. The catalysed reaction is tRNA(Cys) + L-cysteine + ATP = L-cysteinyl-tRNA(Cys) + AMP + diphosphate. The polypeptide is Cysteine--tRNA ligase (Methanococcus aeolicus (strain ATCC BAA-1280 / DSM 17508 / OCM 812 / Nankai-3)).